The sequence spans 482 residues: Early growth response protein 4 (482 aa).

Residues 274–357 are disordered; the sequence is DLGEGAESLP…PPAKARRKGR (84 aa). Positions 280-290 are enriched in low complexity; the sequence is ESLPGLLTPPS. A compositionally biased stretch (gly residues) spans 291-302; it reads GEGGSSGEGGEF. A compositionally biased stretch (pro residues) spans 337-349; the sequence is PEPPVPPPAPFPP. 3 C2H2-type zinc fingers span residues 376–400, 406–428, and 434–456; these read FACPVESCVRSFARSDELNRHLRIH, FQCRICLRNFSRSDHLTTHVRTH, and FACDVCGRRFARSDEKKRHSKVH.

Belongs to the EGR C2H2-type zinc-finger protein family. As to expression, expressed in brain. In the cerebellum and frontal cortex.

The protein resides in the nucleus. Transcriptional regulator. Recognizes and binds to the DNA sequence 5'-GCGGGGGCG-3' (GSG). Activates the transcription of target genes whose products are required for mitogenesis and differentiation. In Bos taurus (Bovine), this protein is Early growth response protein 4 (EGR4).